Reading from the N-terminus, the 356-residue chain is Torsin-like protein (356 aa).

The first 18 residues, 1-18 (MKLDYVLLLLFHLCFVNT), serve as a signal peptide directing secretion. 110–117 (GYTGSGKN) contacts ATP. N-linked (GlcNAc...) asparagine glycosylation is found at asparagine 125 and asparagine 250.

This sequence belongs to the ClpA/ClpB family. Torsin subfamily.

It localises to the endoplasmic reticulum lumen. In terms of biological role, may serve as a molecular chaperone assisting in the proper folding of secreted and/or membrane proteins. The protein is Torsin-like protein (ooc-5) of Caenorhabditis elegans.